The primary structure comprises 174 residues: UPF0200 protein PAE1629 (174 aa).

Gly-9 to Thr-16 provides a ligand contact to ATP.

The protein belongs to the UPF0200 family.

The chain is UPF0200 protein PAE1629 from Pyrobaculum aerophilum (strain ATCC 51768 / DSM 7523 / JCM 9630 / CIP 104966 / NBRC 100827 / IM2).